The sequence spans 220 residues: UPF0319 protein YccT (220 aa).

An N-terminal signal peptide occupies residues 1 to 20 (MKTGIVTTLIALCLPVSVFA).

The protein belongs to the UPF0319 family.

The sequence is that of UPF0319 protein YccT from Escherichia coli (strain 55989 / EAEC).